The sequence spans 76 residues: Large ribosomal subunit protein uL29 (76 aa).

Belongs to the universal ribosomal protein uL29 family.

The polypeptide is Large ribosomal subunit protein uL29 (Corynebacterium glutamicum (strain R)).